The following is a 196-amino-acid chain: Protein TEX261 (196 aa).

A run of 5 helical transmembrane segments spans residues phenylalanine 3–valine 23, serine 42–phenylalanine 62, isoleucine 70–isoleucine 90, phenylalanine 97–glutamate 117, and valine 125–serine 145.

This sequence belongs to the SVP26 family. In terms of tissue distribution, detected in testis.

The protein localises to the membrane. This is Protein TEX261 (Tex261) from Mus musculus (Mouse).